Reading from the N-terminus, the 180-residue chain is MYPAKPTVATASEPVTGMAAPPVTGIPISSPGPAVAASQWSSGLCACFDDCGLCCMTCWCPCVTFGRIAEVVDRGATSCAAAGAIYTLLACFTGFQCHWIYSCTYRSKMRAQLGLPDVGCCDCCVHFCCEPCALCQQYRELRARGLDPALGWDVNAQKAANNNAGAGMTMYPPTAQGMGR.

A helical membrane pass occupies residues 80-102; sequence AAAGAIYTLLACFTGFQCHWIYS.

The protein belongs to the cornifelin family. As to expression, expressed in roots, leaves, immature ears and silks. Detected preferentially in silks.

It localises to the membrane. The chain is Cell number regulator 7 (CNR7) from Zea mays (Maize).